Reading from the N-terminus, the 187-residue chain is Ubiquinone biosynthesis protein COQ4 homolog, mitochondrial (187 aa).

Residues histidine 77, aspartate 78, histidine 81, and glutamate 93 each coordinate Zn(2+).

This sequence belongs to the COQ4 family. Component of a multi-subunit COQ enzyme complex. Zn(2+) serves as cofactor.

Its subcellular location is the mitochondrion inner membrane. It carries out the reaction a 4-hydroxy-3-methoxy-5-(all-trans-polyprenyl)benzoate + H(+) = a 2-methoxy-6-(all-trans-polyprenyl)phenol + CO2. It participates in cofactor biosynthesis; ubiquinone biosynthesis. In terms of biological role, lyase that catalyzes the C1-decarboxylation of 4-hydroxy-3-methoxy-5-(all-trans-polyprenyl)benzoic acid into 2-methoxy-6-(all-trans-polyprenyl)phenol during ubiquinone biosynthesis. The polypeptide is Ubiquinone biosynthesis protein COQ4 homolog, mitochondrial (Leishmania major).